The following is a 582-amino-acid chain: Two-component response regulator ORR26 (582 aa).

The region spanning 11–126 (RVLVVDDDPT…ELRNIWQHVY (116 aa)) is the Response regulatory domain. The residue at position 62 (Asp62) is a 4-aspartylphosphate. Over residues 166 to 182 (SDTMRKRKDVDKDHADQ) the composition is skewed to basic and acidic residues. A disordered region spans residues 166–187 (SDTMRKRKDVDKDHADQESSDG). Residues 189-248 (TVKKARVVWSVDLHQKFVNAVNQIGFDKVGPKKILDLMNVPGLTRENVASHLQKYRLYLS) constitute a DNA-binding region (myb-like GARP).

Belongs to the ARR family. Type-B subfamily. Two-component system major event consists of a His-to-Asp phosphorelay between a sensor histidine kinase (HK) and a response regulator (RR). In plants, the His-to-Asp phosphorelay involves an additional intermediate named Histidine-containing phosphotransfer protein (HPt). This multistep phosphorelay consists of a His-Asp-His-Asp sequential transfer of a phosphate group between first a His and an Asp of the HK protein, followed by the transfer to a conserved His of the HPt protein and finally the transfer to an Asp in the receiver domain of the RR protein.

The protein localises to the nucleus. Its function is as follows. Transcriptional activator that binds specific DNA sequence. Functions as a response regulator involved in His-to-Asp phosphorelay signal transduction system. Phosphorylation of the Asp residue in the receiver domain activates the ability of the protein to promote the transcription of target genes. May directly activate some type-A response regulators in response to cytokinins. In Oryza sativa subsp. japonica (Rice), this protein is Two-component response regulator ORR26.